The chain runs to 160 residues: Transcription elongation factor GreA (160 aa).

Positions 1–72 (MAEKTYVMTL…QIQILETKIR (72 aa)) form a coiled coil.

It belongs to the GreA/GreB family.

Necessary for efficient RNA polymerase transcription elongation past template-encoded arresting sites. The arresting sites in DNA have the property of trapping a certain fraction of elongating RNA polymerases that pass through, resulting in locked ternary complexes. Cleavage of the nascent transcript by cleavage factors such as GreA or GreB allows the resumption of elongation from the new 3'terminus. GreA releases sequences of 2 to 3 nucleotides. The sequence is that of Transcription elongation factor GreA from Streptococcus thermophilus (strain CNRZ 1066).